We begin with the raw amino-acid sequence, 67 residues long: MPKKLKIKLVKSPIGYSWDQKDTVKRLGLRKLNQIVVKDDLPQIRGMIRKVRHLVEVEEIEEGGSNA.

Belongs to the universal ribosomal protein uL30 family. In terms of assembly, part of the 50S ribosomal subunit.

This chain is Large ribosomal subunit protein uL30, found in Thermotoga petrophila (strain ATCC BAA-488 / DSM 13995 / JCM 10881 / RKU-1).